A 788-amino-acid chain; its full sequence is Endonuclease MutS2 (788 aa).

Residue 332–339 (GPNTGGKT) coordinates ATP. One can recognise a Smr domain in the interval 713–788 (VDLRGMDAEE…GTGVTVVELK (76 aa)).

It belongs to the DNA mismatch repair MutS family. MutS2 subfamily. In terms of assembly, homodimer. Binds to stalled ribosomes, contacting rRNA.

Endonuclease that is involved in the suppression of homologous recombination and thus may have a key role in the control of bacterial genetic diversity. Its function is as follows. Acts as a ribosome collision sensor, splitting the ribosome into its 2 subunits. Detects stalled/collided 70S ribosomes which it binds and splits by an ATP-hydrolysis driven conformational change. Acts upstream of the ribosome quality control system (RQC), a ribosome-associated complex that mediates the extraction of incompletely synthesized nascent chains from stalled ribosomes and their subsequent degradation. Probably generates substrates for RQC. The sequence is that of Endonuclease MutS2 from Clostridium botulinum (strain ATCC 19397 / Type A).